A 1100-amino-acid chain; its full sequence is Tyrosine-protein kinase JAK3 (1100 aa).

Residues 1–223 (MAPPSEETPL…RRTVVQALRR (223 aa)) form a cytokine/interferon/growth hormone receptors region. The residue at position 17 (serine 17) is a Phosphoserine. The FERM domain occupies 24 to 353 (GALHVLLPPR…GYFRLICDSR (330 aa)). One can recognise an SH2; atypical domain in the interval 372–472 (LCHGPITLDF…GTALNLTSCC (101 aa)). The 261-residue stretch at 517-777 (LEWHENLGHG…AILRDLNGLI (261 aa)) folds into the Protein kinase 1 domain. Tyrosine 781 carries the phosphotyrosine; by autocatalysis modification. The Protein kinase 2 domain occupies 818–1091 (LKYISLLGKG…PAFDTLSPQL (274 aa)). Residues 824–832 (LGKGNFGSV) and lysine 851 each bind ATP. Residues tyrosine 900 and tyrosine 935 each carry the phosphotyrosine modification. The Proton acceptor role is filled by aspartate 945. 2 positions are modified to phosphotyrosine; by autocatalysis: tyrosine 976 and tyrosine 977.

Belongs to the protein kinase superfamily. Tyr protein kinase family. JAK subfamily. Interacts with STAM2 and MYO18A. Interacts with SHB. Interacts with CD69. Autophosphorylated, leading to regulate its activity. IL2 promotes phosphorylation on tyrosine residues, including autophosphorylation on Tyr-781. Dephosphorylation of Tyr-976 and Tyr-977 by PTPN2 negatively regulates cytokine-mediated signaling. As to expression, in contrast with the ubiquitous expression of the other JAKs, JAK3 is predominantly expressed in hematopoietic tissues.

The protein resides in the endomembrane system. It is found in the cytoplasm. It catalyses the reaction L-tyrosyl-[protein] + ATP = O-phospho-L-tyrosyl-[protein] + ADP + H(+). In terms of biological role, non-receptor tyrosine kinase involved in various processes such as cell growth, development, or differentiation. Mediates essential signaling events in both innate and adaptive immunity and plays a crucial role in hematopoiesis during T-cells development. In the cytoplasm, plays a pivotal role in signal transduction via its association with type I receptors sharing the common subunit gamma such as IL2R, IL4R, IL7R, IL9R, IL15R and IL21R. Following ligand binding to cell surface receptors, phosphorylates specific tyrosine residues on the cytoplasmic tails of the receptor, creating docking sites for STATs proteins. Subsequently, phosphorylates the STATs proteins once they are recruited to the receptor. Phosphorylated STATs then form homodimer or heterodimers and translocate to the nucleus to activate gene transcription. For example, upon IL2R activation by IL2, JAK1 and JAK3 molecules bind to IL2R beta (IL2RB) and gamma chain (IL2RG) subunits inducing the tyrosine phosphorylation of both receptor subunits on their cytoplasmic domain. Then, STAT5A and STAT5B are recruited, phosphorylated and activated by JAK1 and JAK3. Once activated, dimerized STAT5 translocates to the nucleus and promotes the transcription of specific target genes in a cytokine-specific fashion. In Rattus norvegicus (Rat), this protein is Tyrosine-protein kinase JAK3.